The chain runs to 795 residues: Nucleolar complex protein 3 homolog (795 aa).

Disordered regions lie at residues Met-1–Met-88, Arg-124–Lys-144, and Ile-168–Glu-190. Basic and acidic residues-rich tracts occupy residues Leu-22–Ala-39 and Gln-46–Ser-58. Acidic residues predominate over residues Glu-74–Met-88. The span at Glu-171–Asp-181 shows a compositional bias: acidic residues. A coiled-coil region spans residues Ser-447–Thr-492.

The protein belongs to the CBF/MAK21 family.

Its subcellular location is the nucleus. The protein resides in the nucleolus. This is Nucleolar complex protein 3 homolog (noc3l) from Xenopus laevis (African clawed frog).